A 55-amino-acid polypeptide reads, in one-letter code: Ferredoxin (55 aa).

2 4Fe-4S ferredoxin-type domains span residues 2–27 (YFITDACISCGACESECPVSPISPGD) and 28–55 (SVYVIDADACIECGACANVCPVDAPQQK). [4Fe-4S] cluster is bound by residues Cys-8, Cys-11, Cys-14, Cys-18, Cys-37, Cys-40, Cys-43, and Cys-47.

It depends on [4Fe-4S] cluster as a cofactor.

Ferredoxins are iron-sulfur proteins that transfer electrons in a wide variety of metabolic reactions. In Acetivibrio thermocellus (Hungateiclostridium thermocellum), this protein is Ferredoxin.